A 410-amino-acid polypeptide reads, in one-letter code: Acetyltransferase aurG (410 aa).

Transmembrane regions (helical) follow at residues 3–23 (LWLV…VVCF), 28–48 (SLVR…GLIL), and 59–79 (WSLV…VGLI). A compositionally biased stretch (polar residues) spans 90-99 (TSSRGGQPNA). The tract at residues 90-112 (TSSRGGQPNASLDLAGRKKPPSS) is disordered. N-linked (GlcNAc...) asparagine glycosylation occurs at Asn-98. 4 helical membrane passes run 157–177 (AMTL…GGDL), 219–239 (MYFS…MVGL), 300–320 (ILAT…YSYG), and 364–384 (IGYV…FFPL).

This sequence belongs to the wax synthase family.

It localises to the membrane. Its pathway is polyketide biosynthesis. Acetyltransferase; part of the gene cluster that mediates the biosynthesis of aurovertins, fungal polyketides that exhibit potent inhibition of adenosine triphosphate synthase. Tha biosynthesis starts with the HR-PKS aurA that selects propionate as the starter unit; synthesizes a hexa-ene chain through the repeated functions of the KR and DH domains in the first six iterations; selectively introduces three alpha-methyl substitutions at C4, C6, and C16 using the S-adensylmethionine-dependent cMET; and shuts off KR and DH in the last three iterations to afford a 1,3,5-triketo portion that can undergo intramolecular cyclization to yield the alpha-pyrone intermediate. AurE may act as a cyclase and enhances the rate of pyrone formation and product release of aurA. The methyltransferase aurB then methylates the C17 hydroxyl group. C17 methylation is required to initiate epoxidation by the downstream monooxygenase aurC. The monooxygenase aurC and the epoxide hydrolase aurD can iteratively transform the terminal triene portion of the methylated precursor into the dioxabicyclo[3.2.1]octane scaffold of aurovertin E. Epoxidation modifications of the precursor occur in two separate steps; bis-epoxidation of the two terminal olefins takes place first, followed by another epoxidation that occurs at C7-C8 after tetrahydrofuran formation. The O-acyltransferase aurG converts aurovertin E to aurovertin A. The protein is Acetyltransferase aurG of Calcarisporium arbuscula (Dendryphion arbuscula).